The following is a 360-amino-acid chain: Probable L-asparaginase 3 (360 aa).

The signal sequence occupies residues 1–16 (MWSSIISFLFFSVALC). 3 N-linked (GlcNAc...) asparagine glycosylation sites follow: Asn-27, Asn-35, and Asn-40. Residues 39-359 (PNVTIFAMGG…QNITDIFSLE (321 aa)) enclose the Asparaginase/glutaminase domain. The active-site O-isoaspartyl threonine intermediate is Thr-49. The N-linked (GlcNAc...) asparagine glycan is linked to Asn-82. Residue Ser-96 participates in substrate binding. Asn-106 is a glycosylation site (N-linked (GlcNAc...) asparagine). A substrate-binding site is contributed by 129-130 (TD). Residues Asn-144, Asn-179, Asn-246, Asn-302, and Asn-351 are each glycosylated (N-linked (GlcNAc...) asparagine).

Belongs to the asparaginase 1 family.

It localises to the secreted. It is found in the cell wall. The catalysed reaction is L-asparagine + H2O = L-aspartate + NH4(+). The protein is Probable L-asparaginase 3 of Schizosaccharomyces pombe (strain 972 / ATCC 24843) (Fission yeast).